The primary structure comprises 500 residues: Cytochrome P450 monooxygenase hepD (500 aa).

Residues 15–35 traverse the membrane as a helical segment; sequence WILLSLSLAFIVVYSLFYLAV. N-linked (GlcNAc...) asparagine glycosylation is found at N99, N185, N373, and N409. Position 445 (C445) interacts with heme. Residue N482 is glycosylated (N-linked (GlcNAc...) asparagine).

It belongs to the cytochrome P450 family. Heme serves as cofactor.

Its subcellular location is the membrane. It participates in secondary metabolite biosynthesis. In terms of biological role, cytochrome P450 monooxygenase; part of the gene cluster that mediates the biosynthesis of heptelidic acid (HA), a sesquiterpene lactone that acts as an inhibitor of glyceraldehyde-3-phosphatedehydrogenase (GAPDH) and a growth inhibitor of the salt-tolerant lactic acid bacteria in soy sauce brewing. This is Cytochrome P450 monooxygenase hepD from Aspergillus oryzae (strain ATCC 42149 / RIB 40) (Yellow koji mold).